We begin with the raw amino-acid sequence, 140 residues long: Large ribosomal subunit protein bL17 (140 aa).

The protein belongs to the bacterial ribosomal protein bL17 family. As to quaternary structure, part of the 50S ribosomal subunit. Contacts protein L32.

The polypeptide is Large ribosomal subunit protein bL17 (Gluconobacter oxydans (strain 621H) (Gluconobacter suboxydans)).